A 618-amino-acid polypeptide reads, in one-letter code: UvrABC system protein C (618 aa).

The region spanning 19-97 (SEPGIYRMLD…IKALRPKYNV (79 aa)) is the GIY-YIG domain. Residues 208-243 (QIILDELAERMKNAVSQLNFEEAAVLRDQIKNLRLI) enclose the UVR domain.

Belongs to the UvrC family. As to quaternary structure, interacts with UvrB in an incision complex.

It localises to the cytoplasm. Functionally, the UvrABC repair system catalyzes the recognition and processing of DNA lesions. UvrC both incises the 5' and 3' sides of the lesion. The N-terminal half is responsible for the 3' incision and the C-terminal half is responsible for the 5' incision. The sequence is that of UvrABC system protein C from Legionella pneumophila (strain Lens).